The following is a 475-amino-acid chain: Equilibrative nucleoside transporter 3 (475 aa).

The disordered stretch occupies residues 1-24 (MAVVSEDDFQHSSNSTYRTTSSSL). The Cytoplasmic portion of the chain corresponds to 1 to 53 (MAVVSEDDFQHSSNSTYRTTSSSLRADQEALLEKLLDRPPPGLQRPEDRFCGT). Residues 12–23 (SSNSTYRTTSSS) show a composition bias toward low complexity. Residues Ser-21 and Ser-23 each carry the phosphoserine modification. The Dileucine internalization motif motif lies at 31–32 (LL). A helical membrane pass occupies residues 54–74 (YIIFFSLGIGSLLPWNFFITA). Residues 75–105 (KEYWMFKLRNSSSPATGEDPEGSDILNYFES) lie on the Extracellular side of the membrane. A glycan (N-linked (GlcNAc...) asparagine) is linked at Asn-84. A helical transmembrane segment spans residues 106–126 (YLAVASTVPSMLCLVANFLLV). Residues 127–134 (NRVAVHIR) are Cytoplasmic-facing. Residues 135–155 (VLASLTVILAIFMVITALVKV) traverse the membrane as a helical segment. At 156-162 (DTSSWTR) the chain is on the extracellular side. Residues 163–183 (GFFAVTIVCMVILSGASTVFS) form a helical membrane-spanning segment. Residues 184–199 (SSIYGMTGSFPMRNSQ) are Cytoplasmic-facing. Residues 200 to 220 (ALISGGAMGGTVSAVASLVDL) traverse the membrane as a helical segment. Topologically, residues 221 to 230 (AASSDVRNSA) are extracellular. A helical membrane pass occupies residues 231–251 (LAFFLTATVFLVLCMGLYLLL). Topologically, residues 252 to 305 (SRLEYARYYMRPVLAAHVFSGEEELPQDSLSAPSVASRFIDSHTPPLRPILKKT) are cytoplasmic. The chain crosses the membrane as a helical span at residues 306–326 (ASLGFCVTYVFFITSLIYPAI). Residues 327–337 (CTNIESLNKGS) are Extracellular-facing. A helical transmembrane segment spans residues 338 to 358 (GSLWTTKFFIPLTTFLLYNFA). Residues 359–377 (DLCGRQLTAWIQVPGPNSK) are Cytoplasmic-facing. The helical transmembrane segment at 378–398 (ALPGFVLLRTCLIPLFVLCNY) threads the bilayer. Residues 399–415 (QPRVHLKTVVFQSDVYP) are Extracellular-facing. The helical transmembrane segment at 416 to 436 (ALLSSLLGLSNGYLSTLALLY) threads the bilayer. Topologically, residues 437–454 (GPKIVPRELAEATGVVMS) are cytoplasmic. The helical transmembrane segment at 455-475 (FYVCLGLTLGSACSTLLVHLI) threads the bilayer.

It belongs to the SLC29A/ENT transporter (TC 2.A.57) family. As to expression, widely expressed in both adult and fetal tissues. Highest levels in placenta, uterus, ovary, spleen, lymph node and bone marrow. Expressed in liver. Lowest levels in brain and heart. Expressed in macrophages.

The protein localises to the lysosome membrane. Its subcellular location is the late endosome membrane. It is found in the mitochondrion membrane. It localises to the cell membrane. The catalysed reaction is adenosine(in) = adenosine(out). The enzyme catalyses guanosine(in) = guanosine(out). It carries out the reaction inosine(in) = inosine(out). It catalyses the reaction uridine(out) = uridine(in). The catalysed reaction is cytidine(in) = cytidine(out). The enzyme catalyses thymidine(in) = thymidine(out). It carries out the reaction 2'-deoxyadenosine(in) = 2'-deoxyadenosine(out). It catalyses the reaction 2'-deoxycytidine(in) = 2'-deoxycytidine(out). The catalysed reaction is guanine(out) = guanine(in). The enzyme catalyses uracil(in) = uracil(out). It carries out the reaction (R)-noradrenaline(out) = (R)-noradrenaline(in). It catalyses the reaction dopamine(out) = dopamine(in). The catalysed reaction is serotonin(out) = serotonin(in). The enzyme catalyses tyramine(in) = tyramine(out). It carries out the reaction ATP(in) = ATP(out). In terms of biological role, uniporter that mediates the facilitative transport of nucleoside across lysosomal and mitochondrial membranes. Functions as a non-electrogenic Na(+)-independent transporter. Substrate transport is pH-dependent and enhanced under acidic condition, probably reflecting the location of the transporter in acidic intracellular compartments. Proton is not a cotransporting ion but most likely change the ionization state of the transporter which dictates transport-permissible/impermissible conformation for nucleoside translocation. May direct the nucleoside transport from lysosomes to cytosol or cytosol to mitochondria to facilitate the fundamental function of salvage synthesis of nucleic acids. Involved in the transport of nucleosides (adenosine, guanosine, uridine, thymidine, cytidine and inosine) and deoxynucleosides (deoxyadenosine, deoxycytidine). Also mediates transport of purine nucleobases (adenine, guanine) and pyrimidine nucleobases (uracil). Also able to transport monoamine neurotransmitters dopamine, serotonin, noradrenaline and tyramine. Capable of transporting ATP. Mediates nucleoside export from lysosomes in macrophages, which regulates macrophage functions and numbers. The chain is Equilibrative nucleoside transporter 3 from Homo sapiens (Human).